The chain runs to 91 residues: Virion membrane protein A14 homolog (91 aa).

The Intravirion portion of the chain corresponds to 1-12 (MDPLGFFRNRPS). A helical membrane pass occupies residues 13–33 (YVVVFGIILLIVACICAYIEL). Topologically, residues 34–46 (SKSGKPADSALRS) are virion surface. The helical transmembrane segment at 47-67 (ISIISFILAILLLLGIILFSG) threads the bilayer. Residues 68-91 (YNRYCTGNVVDESRYATSPGTEIQ) are Intravirion-facing.

It belongs to the chordopoxvirinae A14 family. As to quaternary structure, homodimer; disulfide-linked. Interacts with A17. Phosphorylated by viral F10 kinase, phosphorylation state is regulated by H1 phosphatase.

It localises to the virion membrane. In terms of biological role, envelope protein which is a major component of the mature virion (MV) membrane. Essential for membrane biogenesis. Is required, together with A17, to form bona fide crescents, which can progress to form the immature virion (IV) membrane. A14 and A17 form a lattice that is stabilized by disulfide bonds and serves as an anchor within the viral membrane to which several other proteins important in virion structure and morphogenesis attach. This is Virion membrane protein A14 homolog from Fowlpox virus (strain NVSL) (FPV).